The primary structure comprises 1770 residues: Transposon Ty2-C Gag-Pol polyprotein (1770 aa).

Polar residues-rich tracts occupy residues 1–11, 19–39, and 49–60; these read MESQQLHQNPR, ASVT…SASN, and KVNSQQETTPGT. Disordered regions lie at residues 1–88 and 355–453; these read MESQ…YQQH and SQYK…LPDH. The interval 295-397 is RNA-binding; it reads ENNINVSDRL…SSKPRAAKAH (103 aa). A compositionally biased stretch (low complexity) spans 369-382; that stretch reads TSPNTTNTKVTTRN. Composition is skewed to polar residues over residues 399–408 and 415–435; these read IATSSKFSRV and ESTV…GQQQ. The active-site For protease activity; shared with dimeric partner is the Asp457. An integrase-type zinc finger-like region spans residues 579–636; sequence NVNKSKSVNKYPYPLIHRMLGHANFRSIQKSLKKNAVTYLKESDIEWSNASTYQCPDC. Positions 656–831 constitute an Integrase catalytic domain; the sequence is ESYEPFQYLH…AGLDITTILP (176 aa). Asp667 and Asp732 together coordinate Mg(2+). Disordered stretches follow at residues 1003–1038 and 1057–1205; these read EMGG…MIDL and GGTE…TEIE. Polar residues-rich tracts occupy residues 1009-1024 and 1065-1082; these read ESDT…FTAR and QRNS…STPS. The Bipartite nuclear localization signal motif lies at 1193-1227; it reads KKRSLEDNETEIEVSRDTWNNKNMRSLEPPRSKKR. Residues 1353 to 1491 form the Reverse transcriptase Ty1/copia-type domain; it reads NDYYITQLDI…DILGLEIKYQ (139 aa). Mg(2+) contacts are provided by Asp1361, Asp1442, Asp1443, Asp1625, Glu1667, and Asp1700. The region spanning 1625 to 1767 is the RNase H Ty1/copia-type domain; sequence DASYGNQPYY…IKTFKLLTNK (143 aa).

In terms of assembly, the capsid protein forms a homotrimer, from which the VLPs are assembled. The protease is a homodimer, whose active site consists of two apposed aspartic acid residues. Post-translationally, initially, virus-like particles (VLPs) are composed of the structural unprocessed proteins Gag and Gag-Pol, and also contain the host initiator methionine tRNA (tRNA(i)-Met) which serves as a primer for minus-strand DNA synthesis, and a dimer of genomic Ty RNA. Processing of the polyproteins occurs within the particle and proceeds by an ordered pathway, called maturation. First, the protease (PR) is released by autocatalytic cleavage of the Gag-Pol polyprotein, and this cleavage is a prerequisite for subsequent processing at the remaining sites to release the mature structural and catalytic proteins. Maturation takes place prior to the RT reaction and is required to produce transposition-competent VLPs.

It is found in the cytoplasm. Its subcellular location is the nucleus. The enzyme catalyses DNA(n) + a 2'-deoxyribonucleoside 5'-triphosphate = DNA(n+1) + diphosphate. It catalyses the reaction Endonucleolytic cleavage to 5'-phosphomonoester.. Its function is as follows. Capsid protein (CA) is the structural component of the virus-like particle (VLP), forming the shell that encapsulates the retrotransposons dimeric RNA genome. The particles are assembled from trimer-clustered units and there are holes in the capsid shells that allow for the diffusion of macromolecules. CA also has nucleocapsid-like chaperone activity, promoting primer tRNA(i)-Met annealing to the multipartite primer-binding site (PBS), dimerization of Ty2 RNA and initiation of reverse transcription. Functionally, the aspartyl protease (PR) mediates the proteolytic cleavages of the Gag and Gag-Pol polyproteins after assembly of the VLP. Reverse transcriptase/ribonuclease H (RT) is a multifunctional enzyme that catalyzes the conversion of the retro-elements RNA genome into dsDNA within the VLP. The enzyme displays a DNA polymerase activity that can copy either DNA or RNA templates, and a ribonuclease H (RNase H) activity that cleaves the RNA strand of RNA-DNA heteroduplexes during plus-strand synthesis and hydrolyzes RNA primers. The conversion leads to a linear dsDNA copy of the retrotransposon that includes long terminal repeats (LTRs) at both ends. In terms of biological role, integrase (IN) targets the VLP to the nucleus, where a subparticle preintegration complex (PIC) containing at least integrase and the newly synthesized dsDNA copy of the retrotransposon must transit the nuclear membrane. Once in the nucleus, integrase performs the integration of the dsDNA into the host genome. The protein is Transposon Ty2-C Gag-Pol polyprotein (TY2B-C) of Saccharomyces cerevisiae (strain ATCC 204508 / S288c) (Baker's yeast).